The following is a 360-amino-acid chain: UDP-N-acetylglucosamine--N-acetylmuramyl-(pentapeptide) pyrophosphoryl-undecaprenol N-acetylglucosamine transferase (360 aa).

UDP-N-acetyl-alpha-D-glucosamine-binding residues include serine 198 and glutamine 289.

The protein belongs to the glycosyltransferase 28 family. MurG subfamily.

It localises to the cell membrane. It carries out the reaction Mur2Ac(oyl-L-Ala-gamma-D-Glu-L-Lys-D-Ala-D-Ala)-di-trans,octa-cis-undecaprenyl diphosphate + UDP-N-acetyl-alpha-D-glucosamine = beta-D-GlcNAc-(1-&gt;4)-Mur2Ac(oyl-L-Ala-gamma-D-Glu-L-Lys-D-Ala-D-Ala)-di-trans,octa-cis-undecaprenyl diphosphate + UDP + H(+). It participates in cell wall biogenesis; peptidoglycan biosynthesis. Functionally, cell wall formation. Catalyzes the transfer of a GlcNAc subunit on undecaprenyl-pyrophosphoryl-MurNAc-pentapeptide (lipid intermediate I) to form undecaprenyl-pyrophosphoryl-MurNAc-(pentapeptide)GlcNAc (lipid intermediate II). The sequence is that of UDP-N-acetylglucosamine--N-acetylmuramyl-(pentapeptide) pyrophosphoryl-undecaprenol N-acetylglucosamine transferase from Streptococcus pyogenes serotype M6 (strain ATCC BAA-946 / MGAS10394).